A 360-amino-acid chain; its full sequence is Phospho-N-acetylmuramoyl-pentapeptide-transferase (360 aa).

A run of 10 helical transmembrane segments spans residues 24–44 (RAVM…PWTI), 69–89 (GTPT…TLLW), 92–112 (WANP…ALGF), 133–153 (MVWQ…LAAN), 158–178 (ILIV…GFLV), 199–219 (GLAA…AYVS), 239–259 (VAIF…FNAY), 263–283 (VFMG…VAVI), 288–308 (FVLV…MLQV), and 337–357 (QVVV…LSTL).

This sequence belongs to the glycosyltransferase 4 family. MraY subfamily. Mg(2+) serves as cofactor.

It is found in the cell inner membrane. It catalyses the reaction UDP-N-acetyl-alpha-D-muramoyl-L-alanyl-gamma-D-glutamyl-meso-2,6-diaminopimeloyl-D-alanyl-D-alanine + di-trans,octa-cis-undecaprenyl phosphate = di-trans,octa-cis-undecaprenyl diphospho-N-acetyl-alpha-D-muramoyl-L-alanyl-D-glutamyl-meso-2,6-diaminopimeloyl-D-alanyl-D-alanine + UMP. Its pathway is cell wall biogenesis; peptidoglycan biosynthesis. Catalyzes the initial step of the lipid cycle reactions in the biosynthesis of the cell wall peptidoglycan: transfers peptidoglycan precursor phospho-MurNAc-pentapeptide from UDP-MurNAc-pentapeptide onto the lipid carrier undecaprenyl phosphate, yielding undecaprenyl-pyrophosphoryl-MurNAc-pentapeptide, known as lipid I. The protein is Phospho-N-acetylmuramoyl-pentapeptide-transferase of Neisseria gonorrhoeae (strain ATCC 700825 / FA 1090).